Consider the following 214-residue polypeptide: Cytochrome c biogenesis ATP-binding export protein CcmA (214 aa).

An ABC transporter domain is found at Leu12–Ala214. Gly44 to Thr51 lines the ATP pocket.

It belongs to the ABC transporter superfamily. CcmA exporter (TC 3.A.1.107) family. The complex is composed of two ATP-binding proteins (CcmA) and two transmembrane proteins (CcmB).

Its subcellular location is the cell inner membrane. The enzyme catalyses heme b(in) + ATP + H2O = heme b(out) + ADP + phosphate + H(+). Part of the ABC transporter complex CcmAB involved in the biogenesis of c-type cytochromes; once thought to export heme, this seems not to be the case, but its exact role is uncertain. Responsible for energy coupling to the transport system. The protein is Cytochrome c biogenesis ATP-binding export protein CcmA of Xanthomonas oryzae pv. oryzae (strain MAFF 311018).